A 624-amino-acid polypeptide reads, in one-letter code: Phosphomethylpyrimidine synthase (624 aa).

The disordered stretch occupies residues 48–70; the sequence is SDTHTSQGREKNPPLTVYDTSGP. Residues Asn229, Met258, Tyr287, His323, 343-345, 384-387, and Glu423 contribute to the substrate site; these read SRG and DGLR. Position 427 (His427) interacts with Zn(2+). A substrate-binding site is contributed by Tyr450. His491 is a Zn(2+) binding site. 3 residues coordinate [4Fe-4S] cluster: Cys571, Cys574, and Cys579.

It belongs to the ThiC family. Homodimer. [4Fe-4S] cluster is required as a cofactor.

The catalysed reaction is 5-amino-1-(5-phospho-beta-D-ribosyl)imidazole + S-adenosyl-L-methionine = 4-amino-2-methyl-5-(phosphooxymethyl)pyrimidine + CO + 5'-deoxyadenosine + formate + L-methionine + 3 H(+). It functions in the pathway cofactor biosynthesis; thiamine diphosphate biosynthesis. Catalyzes the synthesis of the hydroxymethylpyrimidine phosphate (HMP-P) moiety of thiamine from aminoimidazole ribotide (AIR) in a radical S-adenosyl-L-methionine (SAM)-dependent reaction. In Nitrosococcus oceani (strain ATCC 19707 / BCRC 17464 / JCM 30415 / NCIMB 11848 / C-107), this protein is Phosphomethylpyrimidine synthase.